Consider the following 137-residue polypeptide: Nucleoside diphosphate kinase (137 aa).

ATP-binding residues include lysine 9, phenylalanine 57, arginine 85, threonine 91, arginine 102, and asparagine 112. Histidine 115 acts as the Pros-phosphohistidine intermediate in catalysis.

It belongs to the NDK family. In terms of assembly, homotetramer. Mg(2+) is required as a cofactor.

It is found in the cytoplasm. The catalysed reaction is a 2'-deoxyribonucleoside 5'-diphosphate + ATP = a 2'-deoxyribonucleoside 5'-triphosphate + ADP. The enzyme catalyses a ribonucleoside 5'-diphosphate + ATP = a ribonucleoside 5'-triphosphate + ADP. Functionally, major role in the synthesis of nucleoside triphosphates other than ATP. The ATP gamma phosphate is transferred to the NDP beta phosphate via a ping-pong mechanism, using a phosphorylated active-site intermediate. The sequence is that of Nucleoside diphosphate kinase from Campylobacter hominis (strain ATCC BAA-381 / DSM 21671 / CCUG 45161 / LMG 19568 / NCTC 13146 / CH001A).